We begin with the raw amino-acid sequence, 675 residues long: Probable metal-nicotianamine transporter YSL16 (675 aa).

A compositionally biased stretch (gly residues) spans 1-11; it reads MDRHALGGGGA. The segment at 1–20 is disordered; that stretch reads MDRHALGGGGALEIEKTPEA. 14 helical membrane-spanning segments follow: residues 50-70, 73-93, 118-138, 162-182, 231-251, 283-303, 329-349, 393-413, 421-441, 453-473, 507-527, 567-587, 605-625, and 633-653; these read GMVA…KLSL, GLIP…LRGW, CAVA…LLGL, GIGW…LTLL, ISFL…CGFL, LVNL…WPLI, FICI…VIVV, MAYT…PVMF, VIIA…GTGL, IALF…AGLV, VGQV…FFLF, LQLC…RDFL, FLVG…VFLW, and AALL…IWTF.

The protein belongs to the YSL (TC 2.A.67.2) family. In terms of tissue distribution, expressed in roots.

Its subcellular location is the membrane. Its function is as follows. May be involved in the transport of nicotianamine-chelated metals. This chain is Probable metal-nicotianamine transporter YSL16 (YSL16), found in Oryza sativa subsp. japonica (Rice).